The sequence spans 184 residues: Uroplakin-2 (184 aa).

The first 25 residues, 1-25, serve as a signal peptide directing secretion; the sequence is MASPLPVRTLPLILILLAVLAPGAS. Positions 26 to 84 are excised as a propeptide; sequence DFNISSLSGPLSPALTESLLVALPPCHLTGGNATLMVRRANDSKVVKSSFMVPPCRGRR. Asn28, Asn57, and Asn66 each carry an N-linked (GlcNAc...) asparagine glycan. The Lumenal segment spans residues 85 to 155; it reads ELVSVVDSGS…IGLGMARTGG (71 aa). Residues 156-180 form a helical membrane-spanning segment; that stretch reads MVVITVLLSVAMFLLVVGFITALAL. The Cytoplasmic portion of the chain corresponds to 181–184; sequence GARK.

This sequence belongs to the uroplakin-2 family. As to quaternary structure, interacts with uroplakin-1a (UPK1A). As to expression, expressed only in the urothelium. Localizes to urothelial superficial cells.

The protein localises to the cell membrane. In terms of biological role, component of the asymmetric unit membrane (AUM); a highly specialized biomembrane elaborated by terminally differentiated urothelial cells. May play an important role in regulating the assembly of the AUM. The sequence is that of Uroplakin-2 (UPK2) from Sus scrofa (Pig).